Consider the following 306-residue polypeptide: Ribonuclease Z (306 aa).

Residues His63, His65, Asp67, His68, His141, Asp208, and His266 each coordinate Zn(2+). Asp67 (proton acceptor) is an active-site residue.

This sequence belongs to the RNase Z family. In terms of assembly, homodimer. Zn(2+) serves as cofactor.

It catalyses the reaction Endonucleolytic cleavage of RNA, removing extra 3' nucleotides from tRNA precursor, generating 3' termini of tRNAs. A 3'-hydroxy group is left at the tRNA terminus and a 5'-phosphoryl group is left at the trailer molecule.. Zinc phosphodiesterase, which displays some tRNA 3'-processing endonuclease activity. Probably involved in tRNA maturation, by removing a 3'-trailer from precursor tRNA. In Chlamydia abortus (strain DSM 27085 / S26/3) (Chlamydophila abortus), this protein is Ribonuclease Z.